Consider the following 296-residue polypeptide: 4-diphosphocytidyl-2-C-methyl-D-erythritol kinase (296 aa).

K22 is a catalytic residue. 105–115 contributes to the ATP binding site; it reads PMGGGLGGGSS. The active site involves D147.

The protein belongs to the GHMP kinase family. IspE subfamily.

The catalysed reaction is 4-CDP-2-C-methyl-D-erythritol + ATP = 4-CDP-2-C-methyl-D-erythritol 2-phosphate + ADP + H(+). It participates in isoprenoid biosynthesis; isopentenyl diphosphate biosynthesis via DXP pathway; isopentenyl diphosphate from 1-deoxy-D-xylulose 5-phosphate: step 3/6. Functionally, catalyzes the phosphorylation of the position 2 hydroxy group of 4-diphosphocytidyl-2C-methyl-D-erythritol. This Photobacterium profundum (strain SS9) protein is 4-diphosphocytidyl-2-C-methyl-D-erythritol kinase.